The primary structure comprises 607 residues: ATP-dependent rRNA helicase SPB4 (607 aa).

The Q motif motif lies at W7–A35. The region spanning I38–V224 is the Helicase ATP-binding domain. S51–T58 lines the ATP pocket. Residues D172–D175 carry the DEAD box motif. In terms of domain architecture, Helicase C-terminal spans K248–P404. Residues K527–L607 form a disordered region. Residues E529–L565 are a coiled coil. 2 stretches are compositionally biased toward basic and acidic residues: residues S543 to T552 and R560 to D570. Over residues I587 to Q601 the composition is skewed to polar residues.

This sequence belongs to the DEAD box helicase family. DDX55/SPB4 subfamily. As to quaternary structure, component of pre-60S ribosomal complexes.

Its subcellular location is the nucleus. It localises to the nucleolus. The enzyme catalyses ATP + H2O = ADP + phosphate + H(+). Its function is as follows. ATP-binding RNA helicase involved in the biogenesis of 60S ribosomal subunits. Binds 90S pre-ribosomal particles and dissociates from pre-60S ribosomal particles after processing of 27SB pre-rRNA. Required for the normal formation of 18S rRNA through the processing of pre-rRNAs at sites A0, A1 and A2, and the normal formation of 25S and 5.8S rRNAs through the processing of pre-rRNAs at sites C1 and C2. This is ATP-dependent rRNA helicase SPB4 from Vanderwaltozyma polyspora (strain ATCC 22028 / DSM 70294 / BCRC 21397 / CBS 2163 / NBRC 10782 / NRRL Y-8283 / UCD 57-17) (Kluyveromyces polysporus).